The chain runs to 72 residues: Translation initiation factor IF-1 (72 aa).

The 72-residue stretch at 1 to 72 (MAKEEVLEFP…TKGRITYRFK (72 aa)) folds into the S1-like domain.

Belongs to the IF-1 family. Component of the 30S ribosomal translation pre-initiation complex which assembles on the 30S ribosome in the order IF-2 and IF-3, IF-1 and N-formylmethionyl-tRNA(fMet); mRNA recruitment can occur at any time during PIC assembly.

It is found in the cytoplasm. In terms of biological role, one of the essential components for the initiation of protein synthesis. Stabilizes the binding of IF-2 and IF-3 on the 30S subunit to which N-formylmethionyl-tRNA(fMet) subsequently binds. Helps modulate mRNA selection, yielding the 30S pre-initiation complex (PIC). Upon addition of the 50S ribosomal subunit IF-1, IF-2 and IF-3 are released leaving the mature 70S translation initiation complex. This chain is Translation initiation factor IF-1, found in Sinorhizobium medicae (strain WSM419) (Ensifer medicae).